The following is a 242-amino-acid chain: Large ribosomal subunit protein uL1 (242 aa).

It belongs to the universal ribosomal protein uL1 family. In terms of assembly, part of the 50S ribosomal subunit.

Binds directly to 23S rRNA. The L1 stalk is quite mobile in the ribosome, and is involved in E site tRNA release. Its function is as follows. Protein L1 is also a translational repressor protein, it controls the translation of the L11 operon by binding to its mRNA. The chain is Large ribosomal subunit protein uL1 from Wigglesworthia glossinidia brevipalpis.